Consider the following 132-residue polypeptide: Small ribosomal subunit protein uS8 (132 aa).

It belongs to the universal ribosomal protein uS8 family. In terms of assembly, part of the 30S ribosomal subunit. Contacts proteins S5 and S12.

One of the primary rRNA binding proteins, it binds directly to 16S rRNA central domain where it helps coordinate assembly of the platform of the 30S subunit. The sequence is that of Small ribosomal subunit protein uS8 from Christiangramia forsetii (strain DSM 17595 / CGMCC 1.15422 / KT0803) (Gramella forsetii).